The sequence spans 382 residues: MDELSETQVMQNETATAVLPLLNGESQSFNLQKHLKYLTKMLDPLPSPFTVLDASRAWMVYWELSSLAILGKLDSSVCERAISSVRQLKGPSGGFCGGNGQDEHLLSTYASILSICLCDSTDAYSLIERDRLYDWLFSLKNPDGSFRVNNEGESDARSVYAAVCVSSLVGISMDDPLFEGTLQWLCKCQTYEGGLSGVPYAEAHGGYTFCALAAIALLGGLDNLNEIKLSTWLVQRQDPALYGFSGRSNKLVDGCYSWWVGASHVIVASGYGSASHKSLPNLFYNPEKLLGYILQCCQSTSGGLRDKPPKRPDQYHTCYCLLGLSSIAYDYRYHTSDGWSYKPSILHSSLSSLLPAHPIYCVPFGFEERIKSYFLSQESSKF.

PFTB repeat units follow at residues 78–119, 129–170, 178–219, 226–268, and 286–328; these read CERA…CLCD, RDRL…SLVG, FEGT…ALLG, EIKL…VIVA, and PEKL…SSIA. (2E,6E)-farnesyl diphosphate contacts are provided by residues 204–207 and 247–250; these read HGGY and RSNK. The Zn(2+) site is built by Asp253 and Cys255. 256–259 provides a ligand contact to (2E,6E)-farnesyl diphosphate; the sequence is YSWW. His316 contacts Zn(2+).

Belongs to the protein prenyltransferase subunit beta family. Heterodimer of an alpha(cwp1) and a beta(cpp1) subunit. The cofactor is Zn(2+).

The enzyme catalyses L-cysteinyl-[protein] + (2E,6E)-farnesyl diphosphate = S-(2E,6E)-farnesyl-L-cysteinyl-[protein] + diphosphate. In terms of biological role, catalyzes the transfer of a farnesyl moiety from farnesyl diphosphate to a cysteine at the fourth position from the C-terminus of several proteins. The beta(cpp1) subunit is responsible for peptide-binding. The polypeptide is Protein farnesyltransferase subunit beta (cpp1) (Schizosaccharomyces pombe (strain 972 / ATCC 24843) (Fission yeast)).